A 340-amino-acid chain; its full sequence is Integral membrane protein SED5 (340 aa).

Topologically, residues 1-319 (MNIKDRTSEF…KYFDRIKSNR (319 aa)) are cytoplasmic. A disordered region spans residues 31–51 (RLQEKESENFANNTTGNGKSV). Residues 39-51 (NFANNTTGNGKSV) show a composition bias toward polar residues. Positions 146 to 173 (LNTQMKNISGSFKDVLEERQRLEMANKD) form a coiled coil. The interval 180 to 231 (TDTGHAPADDQTQSNHAADLTTYNNSNPFMTSLLDESSEKNNNSSNQGELSF) is disordered. A compositionally biased stretch (polar residues) spans 189–209 (DQTQSNHAADLTTYNNSNPFM). Positions 249–311 (NVYLQERNRA…SGAQRELLKY (63 aa)) constitute a t-SNARE coiled-coil homology domain. A helical; Anchor for type IV membrane protein membrane pass occupies residues 320 to 340 (WLAAKVFFIIFVFFVIWVLVN).

This sequence belongs to the syntaxin family. Interacts with SLY1, STF1, SFB3 and GOS1.

It is found in the membrane. The protein localises to the golgi apparatus membrane. Required for vesicular transport between the endoplasmic reticulum and the Golgi complex. Acts as a target organelle soluble NSF attachment protein receptor (t-SNARE). The chain is Integral membrane protein SED5 (SED5) from Saccharomyces cerevisiae (strain ATCC 204508 / S288c) (Baker's yeast).